Here is a 578-residue protein sequence, read N- to C-terminus: Probable nucleoredoxin 1 (578 aa).

3 consecutive Thioredoxin domains span residues 18–172 (SLLS…RARR), 178–321 (SVLV…EKFQ), and 325–485 (ELEK…EIEA).

The protein belongs to the nucleoredoxin family.

It catalyses the reaction [protein]-dithiol + NAD(+) = [protein]-disulfide + NADH + H(+). It carries out the reaction [protein]-dithiol + NADP(+) = [protein]-disulfide + NADPH + H(+). Probable thiol-disulfide oxidoreductase required for pollen tube growth and pollen function in the pistil. Seems not to be required for in vitro pollen tube growth. May be involved in the generation of lipid signaling molecules in pistil. In Arabidopsis thaliana (Mouse-ear cress), this protein is Probable nucleoredoxin 1.